Reading from the N-terminus, the 447-residue chain is MSPLECSECFGDQLMHRTYTWHLTLHSRPNFTRKREIRSESLEIPINVILPQRGTEPFLRLHNLYTTPRCSRQAAMPRISRRVASQHSYPLNRFSSMPFDPMERPTSQADLELDYNPPRVQLSDEMFVFQDGRWVNESCRLQSPYFSPSSSFHHKLHHKRMAKEYLLQEENKSLRDENRALRDENKALRKENKILQVFWEEHKVTLGHEESQTSSPLLHKDTTSQEVVKKDNATLPAQRSKENTLQFIREENRALQQLLEQRQAYWAQAEESATSAEEGKPTSSPKEEPHNSGLLPDQSTSHSSHFEEPKASPTTQEDSKTLRALREMVTNLSGPSGEEEGKAGPNLTDSAQPLQLLREMNQALQALREENRLLQEENRALHAMREEHRVFQEENKALWENNKLKLQQRLVIDTVTEVTARMEMLIEELYAFMPAKNNKDPKKPSRV.

8 positions are modified to phosphoserine: Ser-41, Ser-85, Ser-88, Ser-96, Ser-123, Ser-143, Ser-147, and Ser-149. The stretch at 164 to 197 (EYLLQEENKSLRDENRALRDENKALRKENKILQV) forms a coiled coil. Disordered regions lie at residues 208-244 (HEES…KENT) and 266-320 (WAQA…EDSK). 2 positions are modified to phosphoserine: Ser-211 and Ser-224. Positions 218–232 (LHKDTTSQEVVKKDN) are enriched in basic and acidic residues. A coiled-coil region spans residues 237 to 264 (AQRSKENTLQFIREENRALQQLLEQRQA). Low complexity predominate over residues 266-276 (WAQAEESATSA). Residues Ser-272 and Ser-275 each carry the phosphoserine modification. A compositionally biased stretch (basic and acidic residues) spans 277 to 290 (EEGKPTSSPKEEPH). Phosphoserine is present on residues Ser-333 and Ser-336. Residues 354–412 (LQLLREMNQALQALREENRLLQEENRALHAMREEHRVFQEENKALWENNKLKLQQRLVI) adopt a coiled-coil conformation.

Belongs to the chibby family. SPERT subfamily. Homodimer. Binds to NEK1.

In Rattus norvegicus (Rat), this protein is Protein chibby homolog 2 (Cby2).